The primary structure comprises 396 residues: Probable sugar efflux transporter (396 aa).

The next 12 helical transmembrane spans lie at Val15–Leu35, Val50–Leu70, Leu81–Phe101, Val103–Ala123, Ala136–Ile156, Thr169–Pro189, Pro209–Tyr229, Phe246–Gly266, Leu275–Ala295, Leu301–Val321, Val333–Gly353, and Thr364–Phe384.

It belongs to the major facilitator superfamily. SotB (TC 2.A.1.2) family.

It is found in the cell inner membrane. Involved in the efflux of sugars. The physiological role may be the reduction of the intracellular concentration of toxic sugars or sugar metabolites. The protein is Probable sugar efflux transporter of Salmonella arizonae (strain ATCC BAA-731 / CDC346-86 / RSK2980).